A 422-amino-acid polypeptide reads, in one-letter code: Elongation factor 1-alpha (422 aa).

Positions 5–221 (KPHMNLAVIG…NSLKEPEKPS (217 aa)) constitute a tr-type G domain. The G1 stretch occupies residues 14–21 (GHIDHGKS). 14–21 (GHIDHGKS) is a GTP binding site. Mg(2+) is bound at residue S21. The G2 stretch occupies residues 70-74 (GITID). Positions 91-94 (DCPG) are G3. GTP is bound by residues 91 to 95 (DCPGH) and 146 to 149 (NKMD). A G4 region spans residues 146–149 (NKMD). Positions 185–187 (SAF) are G5.

The protein belongs to the TRAFAC class translation factor GTPase superfamily. Classic translation factor GTPase family. EF-Tu/EF-1A subfamily.

Its subcellular location is the cytoplasm. The catalysed reaction is GTP + H2O = GDP + phosphate + H(+). Its function is as follows. GTP hydrolase that promotes the GTP-dependent binding of aminoacyl-tRNA to the A-site of ribosomes during protein biosynthesis. The chain is Elongation factor 1-alpha from Methanosarcina mazei (strain ATCC BAA-159 / DSM 3647 / Goe1 / Go1 / JCM 11833 / OCM 88) (Methanosarcina frisia).